The sequence spans 522 residues: Light-independent protochlorophyllide reductase subunit B (522 aa).

D36 provides a ligand contact to [4Fe-4S] cluster. Catalysis depends on D290, which acts as the Proton donor. Residue 425 to 426 coordinates substrate; it reads GL.

Belongs to the ChlB/BchB/BchZ family. In terms of assembly, protochlorophyllide reductase is composed of three subunits; ChlL, ChlN and ChlB. Forms a heterotetramer of two ChlB and two ChlN subunits. The cofactor is [4Fe-4S] cluster.

It catalyses the reaction chlorophyllide a + oxidized 2[4Fe-4S]-[ferredoxin] + 2 ADP + 2 phosphate = protochlorophyllide a + reduced 2[4Fe-4S]-[ferredoxin] + 2 ATP + 2 H2O. Its pathway is porphyrin-containing compound metabolism; chlorophyll biosynthesis (light-independent). Component of the dark-operative protochlorophyllide reductase (DPOR) that uses Mg-ATP and reduced ferredoxin to reduce ring D of protochlorophyllide (Pchlide) to form chlorophyllide a (Chlide). This reaction is light-independent. The NB-protein (ChlN-ChlB) is the catalytic component of the complex. This chain is Light-independent protochlorophyllide reductase subunit B, found in Synechococcus sp. (strain CC9311).